Consider the following 464-residue polypeptide: Cysteine--tRNA ligase (464 aa).

Cys27 is a binding site for Zn(2+). The 'HIGH' region signature appears at 29–39 (PTVYDDAHLGH). Zn(2+)-binding residues include Cys203, His234, and Glu238. Positions 266–270 (KMSKS) match the 'KMSKS' region motif. Residue Lys269 coordinates ATP.

It belongs to the class-I aminoacyl-tRNA synthetase family. In terms of assembly, monomer. Zn(2+) is required as a cofactor.

It localises to the cytoplasm. The enzyme catalyses tRNA(Cys) + L-cysteine + ATP = L-cysteinyl-tRNA(Cys) + AMP + diphosphate. The protein is Cysteine--tRNA ligase of Campylobacter concisus (strain 13826).